The following is a 199-amino-acid chain: RNA-binding protein, mRNA-processing factor 2a (199 aa).

One can recognise an RRM domain in the interval 20 to 97 (RTLFVSGLPV…QTLRLEFAKA (78 aa)).

As to quaternary structure, interacts with Bucky ball (BUC); to mediate Balbiani body formation and oocyte polarity during early oogenesis.

The protein localises to the cytoplasm. The protein resides in the nucleus. It is found in the stress granule. RNA-binding protein involved in the regulation of smooth muscle cell differentiation and proliferation in the gastrointestinal system. RNA-binding protein localized in Balbiani body (electron-dense aggregates in the oocyte) and germ plasm during oogenesis, and may be required to maintain germ plasm mRNA translational repression. Translational regulator during topographic map formation in the visual system. Establishes oocyte polarity through interaction with Bucky ball (BUC). Acts as a pre-mRNA alternative splicing regulator. Mediates ACTN1 and FLNB alternative splicing. Likely binds to mRNA tandem CAC trinucleotide or CA dinucleotide motifs. The protein is RNA-binding protein, mRNA-processing factor 2a of Danio rerio (Zebrafish).